The sequence spans 486 residues: Small ribosomal subunit protein uS17B (486 aa).

The tract at residues 1–112 (MRDIGINGIK…IENKSNINFV (112 aa)) is 30S ribosomal protein S17. The tract at residues 113 to 486 (DNLLNVDDKW…ELWTRKNYKS (374 aa)) is unknown.

The protein belongs to the universal ribosomal protein uS17 family. Part of the 30S ribosomal subunit.

One of the primary rRNA binding proteins, it binds specifically to the 5'-end of 16S ribosomal RNA. The polypeptide is Small ribosomal subunit protein uS17B (Methanosarcina acetivorans (strain ATCC 35395 / DSM 2834 / JCM 12185 / C2A)).